Consider the following 637-residue polypeptide: Probable ATP-binding protein YheS (637 aa).

2 consecutive ABC transporter domains span residues 2–246 (IVFS…AQQQ) and 313–527 (LKME…KQEN). ATP is bound by residues 34 to 41 (GKNGCGKS) and 345 to 352 (GRNGAGKS). Residues 523–559 (QKQENQTDEAPKENANSAQARKDQKRREAELRAQTQP) are disordered. The segment covering 542 to 553 (ARKDQKRREAEL) has biased composition (basic and acidic residues).

This sequence belongs to the ABC transporter superfamily. ABCF family. YheS subfamily.

Genetic data indicate it may be involved in ribosome assembly or function. Ectopic expression exacerbates the cold-sensitive growth phenotype of a bipA deletion. In Escherichia coli O6:H1 (strain CFT073 / ATCC 700928 / UPEC), this protein is Probable ATP-binding protein YheS (yheS).